Here is an 823-residue protein sequence, read N- to C-terminus: Tax1-binding protein 1 homolog B (823 aa).

A coiled-coil region spans residues 149 to 487; the sequence is VTTKASYLEQ…QKQVVKFNEQ (339 aa). 2 disordered regions span residues 342-377 and 486-519; these read HRQLLANSSPSGESKALREQLRQKEEQLQATQQQAN and EQQGVKRSPGSDAAAGPLSASPEASAPGSPSTSD. Residues 356–368 show a composition bias toward basic and acidic residues; it reads KALREQLRQKEEQ. Residues 498 to 518 are compositionally biased toward low complexity; sequence AAAGPLSASPEASAPGSPSTS. A coiled-coil region spans residues 548–638; it reads QMLNEERERC…NREEEQKDSN (91 aa). The segment at 650 to 746 is disordered; it reads MPYAQDDPSP…EPAAPEPAEF (97 aa). The segment covering 723–739 has biased composition (acidic residues); that stretch reads LEEPEEPQSTQNDDEPA. 2 UBZ1-type zinc fingers span residues 762-788 and 789-815; these read QKRCPLCEVIFPPHYDQSKFEEHVESH and WKICPMCSEQFPLDCDQQLFEKHVLTH. 8 residues coordinate Zn(2+): C765, C768, H784, H788, C792, C795, H811, and H815.

Expressed at relatively high levels in both proximal and distal regions of the fin bud during pectoral fin development.

May have anti-apoptotic activity. The sequence is that of Tax1-binding protein 1 homolog B (tax1bp1b) from Danio rerio (Zebrafish).